The sequence spans 394 residues: Elongation factor Tu (394 aa).

Residues 10–204 (KPHVNIGTIG…AVDSYIPQPI (195 aa)) form the tr-type G domain. Positions 19–26 (GHVDHGKT) are G1. A GTP-binding site is contributed by 19–26 (GHVDHGKT). Mg(2+) is bound at residue T26. The tract at residues 60–64 (GITIS) is G2. The tract at residues 81-84 (DCPG) is G3. Residues 81 to 85 (DCPGH) and 136 to 139 (NKVD) each bind GTP. The interval 136–139 (NKVD) is G4. A G5 region spans residues 174 to 176 (SAL).

The protein belongs to the TRAFAC class translation factor GTPase superfamily. Classic translation factor GTPase family. EF-Tu/EF-1A subfamily. In terms of assembly, monomer.

Its subcellular location is the cytoplasm. The catalysed reaction is GTP + H2O = GDP + phosphate + H(+). Functionally, GTP hydrolase that promotes the GTP-dependent binding of aminoacyl-tRNA to the A-site of ribosomes during protein biosynthesis. The chain is Elongation factor Tu from Rickettsia typhi (strain ATCC VR-144 / Wilmington).